Here is a 260-residue protein sequence, read N- to C-terminus: Snake venom serine protease serpentokallikrein-1 (260 aa).

An N-terminal signal peptide occupies residues M1–A18. Residues Q19 to L24 constitute a propeptide that is removed on maturation. In terms of domain architecture, Peptidase S1 spans V25–A251. 6 cysteine pairs are disulfide-bonded: C31–C165, C52–C68, C102–C258, C144–C212, C176–C191, and C202–C227. The active-site Charge relay system is H67. N-linked (GlcNAc...) asparagine glycans are attached at residues N81 and N105. The Charge relay system role is filled by D112. N-linked (GlcNAc...) asparagine glycosylation is found at N156 and N172. S206 (charge relay system) is an active-site residue.

Belongs to the peptidase S1 family. Snake venom subfamily. In terms of assembly, monomer. As to expression, expressed by the venom gland.

Its subcellular location is the secreted. Its function is as follows. Snake venom serine protease that may act in the hemostasis system of the prey. The chain is Snake venom serine protease serpentokallikrein-1 from Protobothrops mucrosquamatus (Taiwan habu).